A 216-amino-acid chain; its full sequence is N-acetyltransferase 9-like protein (216 aa).

An N-acetyltransferase domain is found at 68–215 (VLLNENDEAK…DHVELELMRT (148 aa)).

Belongs to the acetyltransferase family. GNAT subfamily.

The protein resides in the cytoplasm. The protein localises to the nucleus. This is N-acetyltransferase 9-like protein from Schizosaccharomyces pombe (strain 972 / ATCC 24843) (Fission yeast).